The following is a 333-amino-acid chain: Casein kinase II subunit alpha-2 (333 aa).

Residues 34–319 (YEVVRKVGRG…AREAMAHPYF (286 aa)) form the Protein kinase domain. Residues 40-48 (VGRGKYSEV) and K63 contribute to the ATP site. The active-site Proton acceptor is the D151.

This sequence belongs to the protein kinase superfamily. Ser/Thr protein kinase family. CK2 subfamily. In terms of assembly, monomer. Autophosphorylated.

The protein localises to the cytoplasm. It carries out the reaction L-seryl-[protein] + ATP = O-phospho-L-seryl-[protein] + ADP + H(+). It catalyses the reaction L-threonyl-[protein] + ATP = O-phospho-L-threonyl-[protein] + ADP + H(+). Its function is as follows. Casein kinases are operationally defined by their preferential utilization of acidic proteins such as caseins as substrates. It can phosphorylate a large number of proteins. Involved in photoperiod sensitivity (PS). Increases days-to-heading under natural day (ND) and long day (LD) conditions, but not under short day (SD) conditions. This is Casein kinase II subunit alpha-2 from Oryza sativa subsp. indica (Rice).